The chain runs to 324 residues: Beta-ketoacyl-[acyl-carrier-protein] synthase III (324 aa).

Catalysis depends on residues Cys114 and His246. Residues 247–251 (QANLR) are ACP-binding. The active site involves Asn276.

The protein belongs to the thiolase-like superfamily. FabH family. Homodimer.

It is found in the cytoplasm. The enzyme catalyses malonyl-[ACP] + acetyl-CoA + H(+) = 3-oxobutanoyl-[ACP] + CO2 + CoA. It participates in lipid metabolism; fatty acid biosynthesis. Its function is as follows. Catalyzes the condensation reaction of fatty acid synthesis by the addition to an acyl acceptor of two carbons from malonyl-ACP. Catalyzes the first condensation reaction which initiates fatty acid synthesis and may therefore play a role in governing the total rate of fatty acid production. Possesses both acetoacetyl-ACP synthase and acetyl transacylase activities. Its substrate specificity determines the biosynthesis of branched-chain and/or straight-chain of fatty acids. This Campylobacter jejuni (strain RM1221) protein is Beta-ketoacyl-[acyl-carrier-protein] synthase III.